A 277-amino-acid chain; its full sequence is Digeranylgeranylglyceryl phosphate synthase (277 aa).

Helical transmembrane passes span Ile16 to Ile36, Gly40 to Phe60, Phe101 to Ala121, Phe129 to Gly149, Val153 to Met173, Ile205 to Gly225, and Leu257 to Val277.

It belongs to the UbiA prenyltransferase family. DGGGP synthase subfamily. It depends on Mg(2+) as a cofactor.

The protein localises to the cell membrane. The enzyme catalyses sn-3-O-(geranylgeranyl)glycerol 1-phosphate + (2E,6E,10E)-geranylgeranyl diphosphate = 2,3-bis-O-(geranylgeranyl)-sn-glycerol 1-phosphate + diphosphate. The protein operates within membrane lipid metabolism; glycerophospholipid metabolism. Prenyltransferase that catalyzes the transfer of the geranylgeranyl moiety of geranylgeranyl diphosphate (GGPP) to the C2 hydroxyl of (S)-3-O-geranylgeranylglyceryl phosphate (GGGP). This reaction is the second ether-bond-formation step in the biosynthesis of archaeal membrane lipids. This is Digeranylgeranylglyceryl phosphate synthase from Pyrococcus abyssi (strain GE5 / Orsay).